A 31-amino-acid polypeptide reads, in one-letter code: GSIPCGESCVYIPCISAVLGCSCKNKVCYRN.

Residues Gly1 to Asn31 constitute a cross-link (cyclopeptide (Gly-Asn)). Intrachain disulfides connect Cys5–Cys21, Cys9–Cys23, and Cys14–Cys28.

Belongs to the cyclotide family. Bracelet subfamily. In terms of processing, this is a cyclic peptide.

Probably participates in a plant defense mechanism. The protein is Cyclotide mden-L of Melicytus dentatus (Tree violet).